The chain runs to 444 residues: Biotin carboxylase 2 (444 aa).

Residues 1–444 (MFTKVLIANR…VTTDFLKQHL (444 aa)) enclose the Biotin carboxylation domain. ATP is bound by residues Lys-116, Lys-158, 164–165 (GG), 200–203 (EKVI), His-208, and His-235. The ATP-grasp domain maps to 120 to 317 (RKAMEAAGVP…LVEQQLRIAA (198 aa)). Residue Lys-237 coordinates hydrogencarbonate. Residues Glu-275 and Glu-288 each coordinate ATP. Residues Glu-275, Glu-288, and Asn-290 each contribute to the Mg(2+) site. Mn(2+) contacts are provided by Glu-275, Glu-288, and Asn-290. Hydrogencarbonate contacts are provided by Arg-292, Val-295, and Arg-338. Arg-292 is a catalytic residue. Arg-338 is a binding site for biotin.

As to quaternary structure, acetyl-CoA carboxylase is a heterohexamer of biotin carboxyl carrier protein, biotin carboxylase and the two subunits of carboxyl transferase in a 2:2 complex. It depends on Mg(2+) as a cofactor. Mn(2+) is required as a cofactor.

The catalysed reaction is N(6)-biotinyl-L-lysyl-[protein] + hydrogencarbonate + ATP = N(6)-carboxybiotinyl-L-lysyl-[protein] + ADP + phosphate + H(+). Its pathway is lipid metabolism; malonyl-CoA biosynthesis; malonyl-CoA from acetyl-CoA: step 1/1. In terms of biological role, this protein is a component of the acetyl coenzyme A carboxylase complex; first, biotin carboxylase catalyzes the carboxylation of the carrier protein and then the transcarboxylase transfers the carboxyl group to form malonyl-CoA. The polypeptide is Biotin carboxylase 2 (accC2) (Bacillus subtilis (strain 168)).